The sequence spans 943 residues: UvrABC system protein A (943 aa).

32–39 (GLSGSGKS) is a binding site for ATP. The C4-type zinc-finger motif lies at 251 to 278 (CPVCGFTVPELEPRLFSFNAPFGSCSEC). 2 consecutive ABC transporter domains span residues 308–589 (WNPI…SKSI) and 609–937 (GNGR…HYLK). 641-648 (GVSGSGKS) contacts ATP. The segment at 740–766 (CEACSGDGIIKIEMHFLPDVYVACEVC) adopts a C4-type zinc-finger fold.

Belongs to the ABC transporter superfamily. UvrA family. In terms of assembly, forms a heterotetramer with UvrB during the search for lesions.

Its subcellular location is the cytoplasm. Its function is as follows. The UvrABC repair system catalyzes the recognition and processing of DNA lesions. UvrA is an ATPase and a DNA-binding protein. A damage recognition complex composed of 2 UvrA and 2 UvrB subunits scans DNA for abnormalities. When the presence of a lesion has been verified by UvrB, the UvrA molecules dissociate. The polypeptide is UvrABC system protein A (Streptococcus pneumoniae serotype 4 (strain ATCC BAA-334 / TIGR4)).